The chain runs to 318 residues: Phosphatidylglycerol--prolipoprotein diacylglyceryl transferase (318 aa).

Helical transmembrane passes span G24 to P44, L60 to I80, and L115 to T135. R164 is an a 1,2-diacyl-sn-glycero-3-phospho-(1'-sn-glycerol) binding site. 2 helical membrane-spanning segments follow: residues V198 to F218 and G285 to L305.

It belongs to the Lgt family.

Its subcellular location is the cell inner membrane. The catalysed reaction is L-cysteinyl-[prolipoprotein] + a 1,2-diacyl-sn-glycero-3-phospho-(1'-sn-glycerol) = an S-1,2-diacyl-sn-glyceryl-L-cysteinyl-[prolipoprotein] + sn-glycerol 1-phosphate + H(+). It participates in protein modification; lipoprotein biosynthesis (diacylglyceryl transfer). Catalyzes the transfer of the diacylglyceryl group from phosphatidylglycerol to the sulfhydryl group of the N-terminal cysteine of a prolipoprotein, the first step in the formation of mature lipoproteins. The polypeptide is Phosphatidylglycerol--prolipoprotein diacylglyceryl transferase (Leptospira interrogans serogroup Icterohaemorrhagiae serovar copenhageni (strain Fiocruz L1-130)).